The sequence spans 310 residues: Porphobilinogen deaminase (310 aa).

Cysteine 242 carries the post-translational modification S-(dipyrrolylmethanemethyl)cysteine.

Belongs to the HMBS family. Monomer. Dipyrromethane serves as cofactor.

The catalysed reaction is 4 porphobilinogen + H2O = hydroxymethylbilane + 4 NH4(+). It participates in porphyrin-containing compound metabolism; protoporphyrin-IX biosynthesis; coproporphyrinogen-III from 5-aminolevulinate: step 2/4. Functionally, tetrapolymerization of the monopyrrole PBG into the hydroxymethylbilane pre-uroporphyrinogen in several discrete steps. The protein is Porphobilinogen deaminase of Shewanella oneidensis (strain ATCC 700550 / JCM 31522 / CIP 106686 / LMG 19005 / NCIMB 14063 / MR-1).